The chain runs to 396 residues: Actin-related protein 6 (396 aa).

Residue Thr-2 is modified to N-acetylthreonine. N6-acetyllysine is present on Lys-260.

Belongs to the actin family. ARP6 subfamily. Component of the chromatin-remodeling SRCAP complex composed of at least SRCAP, DMAP1, RUVBL1, RUVBL2, ACTL6A, YEATS4, ACTR6 and ZNHIT1. Interacts with CBX1, CBX3 and CBX5.

The protein resides in the cytoplasm. The protein localises to the cytoskeleton. It localises to the nucleus. Its subcellular location is the nucleolus. Required for formation and/or maintenance of proper nucleolar structure and function. Plays a dual role in the regulation of ribosomal DNA (rDNA) transcription. In the presence of high glucose, maintains active rDNA transcription through H2A.Z deposition and under glucose starvation, is required for the repression of rDNA transcription, and this function may be independent of H2A.Z. In Homo sapiens (Human), this protein is Actin-related protein 6 (ACTR6).